A 304-amino-acid chain; its full sequence is Acetylglutamate kinase (304 aa).

Substrate contacts are provided by residues 77-78 (GG), Arg99, and Asn193.

It belongs to the acetylglutamate kinase family. ArgB subfamily.

It is found in the cytoplasm. It carries out the reaction N-acetyl-L-glutamate + ATP = N-acetyl-L-glutamyl 5-phosphate + ADP. Its pathway is amino-acid biosynthesis; L-arginine biosynthesis; N(2)-acetyl-L-ornithine from L-glutamate: step 2/4. In terms of biological role, catalyzes the ATP-dependent phosphorylation of N-acetyl-L-glutamate. The protein is Acetylglutamate kinase of Pelodictyon phaeoclathratiforme (strain DSM 5477 / BU-1).